The primary structure comprises 62 residues: Guanine nucleotide-binding protein subunit gamma (62 aa).

Residues 40–62 are disordered; the sequence is DMLVSGPTDQHNPFQEKKSCSVL. Residues 53-62 show a composition bias toward basic and acidic residues; the sequence is FQEKKSCSVL. Cysteine methyl ester is present on Cys-59. Cys-59 carries the S-geranylgeranyl cysteine lipid modification. A propeptide spans 60 to 62 (removed in mature form); that stretch reads SVL.

Belongs to the G protein gamma family. In terms of assembly, g proteins are composed of 3 units, alpha, beta and gamma. Interacts with gpb-1 and gpb-2. In terms of tissue distribution, predominantly expressed in the central nervous system.

The protein resides in the cell membrane. Guanine nucleotide-binding proteins (G proteins) are involved as a modulator or transducer in various transmembrane signaling systems. The beta and gamma chains are required for the GTPase activity, for replacement of GDP by GTP, and for G protein-effector interaction. This Caenorhabditis elegans protein is Guanine nucleotide-binding protein subunit gamma (gpc-1).